The following is a 215-amino-acid chain: Probable transaldolase (215 aa).

K83 functions as the Schiff-base intermediate with substrate in the catalytic mechanism.

It belongs to the transaldolase family. Type 3B subfamily.

The protein localises to the cytoplasm. The enzyme catalyses D-sedoheptulose 7-phosphate + D-glyceraldehyde 3-phosphate = D-erythrose 4-phosphate + beta-D-fructose 6-phosphate. It participates in carbohydrate degradation; pentose phosphate pathway; D-glyceraldehyde 3-phosphate and beta-D-fructose 6-phosphate from D-ribose 5-phosphate and D-xylulose 5-phosphate (non-oxidative stage): step 2/3. Its function is as follows. Transaldolase is important for the balance of metabolites in the pentose-phosphate pathway. This is Probable transaldolase from Desulforapulum autotrophicum (strain ATCC 43914 / DSM 3382 / VKM B-1955 / HRM2) (Desulfobacterium autotrophicum).